The chain runs to 192 residues: Dynein axonemal light chain 1 (192 aa).

LRR repeat units follow at residues Asn49 to Lys70, Tyr71 to Gly92, Thr94 to Lys115, and Lys116 to Gly137. In terms of domain architecture, LRRCT spans Asn150–Ser192.

Belongs to the dynein light chain LC1-type family. Interacts with DNAH5, a outer arm dynein heavy chain. Interacts with tubulin located within the A-tubule of the outer doublets in a ATP-independent manner.

The protein resides in the cytoplasm. It is found in the cytoskeleton. The protein localises to the cilium axoneme. Functionally, part of the multisubunit axonemal ATPase complexes that generate the force for cilia motility and govern beat frequency. Component of the outer arm dynein (ODA). May be involved in a mechanosensory feedback mechanism controlling ODA activity based on external conformational cues by tethering the outer arm dynein heavy chain (DNAH5) to the microtubule within the axoneme. This chain is Dynein axonemal light chain 1 (dnal1), found in Xenopus laevis (African clawed frog).